A 342-amino-acid chain; its full sequence is Transmembrane protein 59-like (342 aa).

An N-terminal signal peptide occupies residues 1 to 24 (MAAVALMPPPLLLLLLLASPPAAS). Residue Asn97 is glycosylated (N-linked (GlcNAc...) asparagine). A helical transmembrane segment spans residues 268–290 (WILACCLFLSVLVMLWLSCSTLV). Positions 340–342 (TKL) match the Microbody targeting signal motif.

It belongs to the TMEM59 family. In terms of tissue distribution, expressed preferentially at high level in the brain.

It is found in the golgi apparatus membrane. In terms of biological role, modulates the O-glycosylation and complex N-glycosylation steps occurring during the Golgi maturation of APP. Inhibits APP transport to the cell surface and further shedding. The polypeptide is Transmembrane protein 59-like (TMEM59L) (Homo sapiens (Human)).